The following is a 169-amino-acid chain: Macrocypin-1a (169 aa).

The protein belongs to the protease inhibitor I85 family.

Inhibits papain and cysteine cathepsin endopeptidases, and also inhibits cathepsins B and H, which exhibit both exopeptidase and endopeptidase activities. This is Macrocypin-1a from Macrolepiota procera (Parasol mushroom).